Here is a 418-residue protein sequence, read N- to C-terminus: UDP-N-acetylglucosamine 1-carboxyvinyltransferase (418 aa).

Phosphoenolpyruvate is bound at residue 22–23 (KN). Residue Arg-91 coordinates UDP-N-acetyl-alpha-D-glucosamine. Cys-115 serves as the catalytic Proton donor. The residue at position 115 (Cys-115) is a 2-(S-cysteinyl)pyruvic acid O-phosphothioketal. UDP-N-acetyl-alpha-D-glucosamine is bound by residues 120–124 (RPVDL), 160–163 (KVSV), Asp-305, and Ile-327.

Belongs to the EPSP synthase family. MurA subfamily.

It localises to the cytoplasm. The enzyme catalyses phosphoenolpyruvate + UDP-N-acetyl-alpha-D-glucosamine = UDP-N-acetyl-3-O-(1-carboxyvinyl)-alpha-D-glucosamine + phosphate. The protein operates within cell wall biogenesis; peptidoglycan biosynthesis. Functionally, cell wall formation. Adds enolpyruvyl to UDP-N-acetylglucosamine. The sequence is that of UDP-N-acetylglucosamine 1-carboxyvinyltransferase from Baumannia cicadellinicola subsp. Homalodisca coagulata.